Consider the following 117-residue polypeptide: G antigen 1 (117 aa).

Residues 1-117 (MSWRGRSTYY…PEEGEGQSQC (117 aa)) form a disordered region. Composition is skewed to acidic residues over residues 32–45 (FSDE…EEGE) and 87–96 (ECEDGPDGQE).

The protein belongs to the GAGE family. In terms of tissue distribution, expressed in a variety of tumor tissues but not in normal tissues, except testis.

Antigen, recognized on melanoma by autologous cytolytic T-lymphocytes. In Homo sapiens (Human), this protein is G antigen 1.